Here is a 130-residue protein sequence, read N- to C-terminus: Small ribosomal subunit protein uS4 (130 aa).

Position 64 is an N6-acetyllysine (Lys64). Lys91 is covalently cross-linked (Glycyl lysine isopeptide (Lys-Gly) (interchain with G-Cter in SUMO2)). One can recognise an S4 RNA-binding domain in the interval 106-130 (RRLQTQVFKLGLAXSIHHXRVLIRQ). At Lys114 the chain carries N6-acetyllysine.

Belongs to the universal ribosomal protein uS4 family. As to quaternary structure, component of the small ribosomal subunit. Identified in a IGF2BP1-dependent mRNP granule complex containing untranslated mRNAs. Part of the small subunit (SSU) processome, composed of more than 70 proteins and the RNA chaperone small nucleolar RNA (snoRNA) U3.

It is found in the cytoplasm. Its subcellular location is the nucleus. The protein resides in the nucleolus. Functionally, component of the small ribosomal subunit. The ribosome is a large ribonucleoprotein complex responsible for the synthesis of proteins in the cell. Part of the small subunit (SSU) processome, first precursor of the small eukaryotic ribosomal subunit. During the assembly of the SSU processome in the nucleolus, many ribosome biogenesis factors, an RNA chaperone and ribosomal proteins associate with the nascent pre-rRNA and work in concert to generate RNA folding, modifications, rearrangements and cleavage as well as targeted degradation of pre-ribosomal RNA by the RNA exosome. This Sus scrofa (Pig) protein is Small ribosomal subunit protein uS4 (RPS9).